The following is a 1031-amino-acid chain: Ookinete maturation protein 1 (1031 aa).

Disordered regions lie at residues 125 to 184 (HNEN…PELE), 340 to 405 (KEAE…DGMR), and 609 to 697 (DAEL…NDSI). Basic residues predominate over residues 141-168 (QKLKKKKKIKKGTKKKSINKISILKHKS). Over residues 171 to 180 (SFPSTQNENT) the composition is skewed to polar residues. Basic and acidic residues predominate over residues 340–357 (KEAEEEERKKNEDEHILE). Residues 377 to 394 (LGKSFKNNESFELNSPQK) show a composition bias toward polar residues. Residues 581 to 646 (IDEENSVFVE…ETQMAGKEEK (66 aa)) are a coiled coil. Residues 610-648 (AELRKDEEEDKSKNNEKDSKSEERDILETQMAGKEEKPV) show a composition bias toward basic and acidic residues. The span at 649 to 659 (LKKKKKNKGKQ) shows a compositional bias: basic residues. The span at 660–686 (RNREGKGVVEKGYDAKREKKENEEKNK) shows a compositional bias: basic and acidic residues.

Its function is as follows. In the mosquito vector midgut, plays a role in ookinete development. This is Ookinete maturation protein 1 from Plasmodium berghei (strain Anka).